We begin with the raw amino-acid sequence, 569 residues long: Cationic amino acid transporter 9, chloroplastic (569 aa).

The N-terminal 41 residues, 1–41, are a transit peptide targeting the chloroplast; it reads MGGHEGFSNQRLSSATWFSHFRASALRSKSLPPPSSQTAVR. A run of 14 helical transmembrane segments spans residues 53–73, 81–101, 113–135, 155–175, 181–201, 215–235, 250–270, 284–304, 333–353, 406–428, 444–464, 467–487, 502–522, and 528–548; these read GLFDLILLGVGASIGAGVFVV, AGPGVTISFLLAGASCVLNAL, VVGGAYMYSYSAFNEITAFLVFV, YAVALLELFPALKGSIPLWMG, LGGLLSLNILAPILLALLTLV, VMTATKVVIVLVVICAGAFEI, AVLTGATVVFFSYVGFDAVAN, IGIMGSLLVCISLYIGVCLVL, ILISIGAVAGLTTTLLVGLYV, HILSVGTLTGYSVVAACVVALRL, WQEGVICLVIIACSGFGAGVF, FSASVIFILLSVGVAVVASAV, FSCPGVPIVPSVCIFFNIFLF, and EAWIRFVVVSVLATAVYALYG.

Belongs to the amino acid-polyamine-organocation (APC) superfamily. Cationic amino acid transporter (CAT) (TC 2.A.3.3) family. In terms of tissue distribution, expressed in roots, stems, flowers, and leaves.

The protein resides in the plastid. The protein localises to the chloroplast membrane. Permease involved in the transport of the cationic amino acids. This chain is Cationic amino acid transporter 9, chloroplastic (CAT9), found in Arabidopsis thaliana (Mouse-ear cress).